Here is a 185-residue protein sequence, read N- to C-terminus: Cbp/p300-interacting transactivator 4 (185 aa).

Disordered regions lie at residues 15-64 (PRPP…VAYG) and 95-130 (YPGR…AHAL). The span at 103–125 (PGAPGGPSGPQPAPGAPAPPLQP) shows a compositional bias: pro residues.

The protein belongs to the CITED family. As to quaternary structure, interacts via its C-terminal region with the CH1 domain of CREBBP and EP300. Interacts with all TFAP2/AP-2 isoforms.

The protein resides in the nucleus. Its subcellular location is the cytoplasm. In terms of biological role, acts as a transcriptional coactivator for TFAP2/AP-2. Enhances estrogen-dependent transactivation mediated by estrogen receptors. May function as an inhibitor of transactivation by HIF1A by disrupting HIF1A interaction with CREBBP. May be involved in regulation of gene expression during development and differentiation of blood cells, endothelial cells and mammary epithelial cells. In Bos taurus (Bovine), this protein is Cbp/p300-interacting transactivator 4 (CITED4).